The chain runs to 121 residues: Spermidine export protein MdtJ (121 aa).

Position 1 (M1) is a topological domain, cytoplasmic. A helical transmembrane segment spans residues 2-22; that stretch reads YIYWILLGLAVATEITGTLSM. At 23–31 the chain is on the periplasmic side; it reads KWASVSEGN. A helical transmembrane segment spans residues 32-52; it reads GGFILMLVMISLSYIFLSFAV. The Cytoplasmic segment spans residues 53-54; sequence KK. A helical membrane pass occupies residues 55 to 75; that stretch reads IALGVAYALWEGIGILFITLF. Residues 76–81 lie on the Periplasmic side of the membrane; that stretch reads SVLLFD. Residues 82–102 traverse the membrane as a helical segment; the sequence is ESLSLMKIAGLTTLVAGIVLI. At 103 to 121 the chain is on the cytoplasmic side; it reads KSGTRKARKPELEVNHGAV.

Belongs to the drug/metabolite transporter (DMT) superfamily. Small multidrug resistance (SMR) (TC 2.A.7.1) family. MdtJ subfamily. Forms a complex with MdtI.

It localises to the cell inner membrane. In terms of biological role, catalyzes the excretion of spermidine. This is Spermidine export protein MdtJ (mdtJ) from Escherichia coli O6:H1 (strain CFT073 / ATCC 700928 / UPEC).